The sequence spans 151 residues: Neuroglobin (151 aa).

Residues 1–149 (MERPEQELIR…VVQAMSRGWD (149 aa)) form the Globin domain. Residues His-64 and His-96 each coordinate heme b.

This sequence belongs to the globin family. In terms of assembly, monomer. Homodimer and homotetramer; disulfide-linked. Mainly monomeric but also detected as part of homodimers and homotetramers. Interacts with 14-3-3 proteins; regulates the phosphorylation of NGB. Could interact (ferrous form) with G-alpha(i) proteins (GTP-bound form). In terms of processing, phosphorylated during hypoxia by ERK1/ERK2. Phosphorylation regulates the heme pocket hexacoordination preventing the association of His-64 with the heme metal center. Thereby, promotes the access of dioxygen and nitrite to the heme and stimulates the nitrite reductase activity. Phosphorylation during hypoxia is stabilized by 14-3-3 proteins.

It localises to the cytoplasm. Its subcellular location is the cytosol. The protein resides in the mitochondrion matrix. It catalyses the reaction Fe(III)-heme b-[protein] + nitric oxide + H2O = Fe(II)-heme b-[protein] + nitrite + 2 H(+). Its function is as follows. Monomeric globin with a bis-histidyl six-coordinate heme-iron atom through which it can bind dioxygen, carbon monoxide and nitric oxide. Could help transport oxygen and increase its availability to the metabolically active neuronal tissues, though its low quantity in tissues as well as its high affinity for dioxygen, which may limit its oxygen-releasing ability, argue against it. The ferrous/deoxygenated form exhibits a nitrite reductase activity and it could produce nitric oxide which in turn inhibits cellular respiration in response to hypoxia. In its ferrous/deoxygenated state, it may also exhibit GDI (Guanine nucleotide Dissociation Inhibitor) activity toward heterotrimeric G-alpha proteins, thereby regulating signal transduction to facilitate neuroprotective responses in the wake of hypoxia and associated oxidative stress. In Oryctolagus cuniculus (Rabbit), this protein is Neuroglobin.